Consider the following 561-residue polypeptide: Transmembrane protein 209 (561 aa).

Phosphoserine occurs at positions 9 and 11. Residues 28 to 48 (VVLAWGLLNVSMAGMIYTEMT) form a helical membrane-spanning segment. Residue Asn-57 is glycosylated (N-linked (GlcNAc...) asparagine). A helical transmembrane segment spans residues 60-80 (YWPLWYIELALASLFSLNALF). Ser-98 carries the post-translational modification Phosphoserine. Disordered regions lie at residues 119-157 (DLAATQIPPAPPSPSIQGQSVLSYSPSRSPSTSPKFTTS) and 195-234 (FSPSPPSPYPTTVGPVESSGLRSRYRSSPTVYNSPTDKED). The segment covering 133–157 (SIQGQSVLSYSPSRSPSTSPKFTTS) has biased composition (low complexity). 3 positions are modified to phosphoserine: Ser-201, Ser-222, and Ser-248. A compositionally biased stretch (polar residues) spans 220–229 (RSSPTVYNSP). Residues 250-271 (EEKQHRVKLGSPDSTSPSSSPT) form a disordered region. Residues 260–271 (SPDSTSPSSSPT) are compositionally biased toward low complexity. An N-linked (GlcNAc...) asparagine glycan is attached at Asn-274. Phosphoserine is present on Ser-278.

As to quaternary structure, interacts with NUP205. In terms of tissue distribution, expressed in the testis.

It is found in the membrane. Its subcellular location is the nucleus envelope. The protein resides in the golgi apparatus. It localises to the cytoplasm. Its function is as follows. Nuclear envelope protein which in association with NUP205, may be involved in nuclear transport of various nuclear proteins in addition to MYC. The protein is Transmembrane protein 209 (TMEM209) of Homo sapiens (Human).